The following is a 262-amino-acid chain: Pyridoxine 5'-phosphate synthase (262 aa).

Asparagine 6 contacts 3-amino-2-oxopropyl phosphate. Aspartate 8–histidine 9 provides a ligand contact to 1-deoxy-D-xylulose 5-phosphate. Residue arginine 17 coordinates 3-amino-2-oxopropyl phosphate. The Proton acceptor role is filled by histidine 41. The 1-deoxy-D-xylulose 5-phosphate site is built by arginine 43 and histidine 48. Catalysis depends on glutamate 68, which acts as the Proton acceptor. Threonine 98 contributes to the 1-deoxy-D-xylulose 5-phosphate binding site. The active-site Proton donor is histidine 210. 3-amino-2-oxopropyl phosphate contacts are provided by residues glycine 211 and glycine 232–glutamine 233.

The protein belongs to the PNP synthase family. As to quaternary structure, homooctamer; tetramer of dimers.

The protein resides in the cytoplasm. It catalyses the reaction 3-amino-2-oxopropyl phosphate + 1-deoxy-D-xylulose 5-phosphate = pyridoxine 5'-phosphate + phosphate + 2 H2O + H(+). It functions in the pathway cofactor biosynthesis; pyridoxine 5'-phosphate biosynthesis; pyridoxine 5'-phosphate from D-erythrose 4-phosphate: step 5/5. Catalyzes the complicated ring closure reaction between the two acyclic compounds 1-deoxy-D-xylulose-5-phosphate (DXP) and 3-amino-2-oxopropyl phosphate (1-amino-acetone-3-phosphate or AAP) to form pyridoxine 5'-phosphate (PNP) and inorganic phosphate. This Campylobacter jejuni subsp. jejuni serotype O:23/36 (strain 81-176) protein is Pyridoxine 5'-phosphate synthase.